The following is a 208-amino-acid chain: N-(5'-phosphoribosyl)anthranilate isomerase (208 aa).

The protein belongs to the TrpF family.

The catalysed reaction is N-(5-phospho-beta-D-ribosyl)anthranilate = 1-(2-carboxyphenylamino)-1-deoxy-D-ribulose 5-phosphate. Its pathway is amino-acid biosynthesis; L-tryptophan biosynthesis; L-tryptophan from chorismate: step 3/5. This is N-(5'-phosphoribosyl)anthranilate isomerase from Lactiplantibacillus plantarum (strain ATCC BAA-793 / NCIMB 8826 / WCFS1) (Lactobacillus plantarum).